Reading from the N-terminus, the 236-residue chain is 2,3,4,5-tetrahydropyridine-2,6-dicarboxylate N-acetyltransferase (236 aa).

The protein belongs to the transferase hexapeptide repeat family. DapH subfamily.

The catalysed reaction is (S)-2,3,4,5-tetrahydrodipicolinate + acetyl-CoA + H2O = L-2-acetamido-6-oxoheptanedioate + CoA. It participates in amino-acid biosynthesis; L-lysine biosynthesis via DAP pathway; LL-2,6-diaminopimelate from (S)-tetrahydrodipicolinate (acetylase route): step 1/3. Catalyzes the transfer of an acetyl group from acetyl-CoA to tetrahydrodipicolinate. The polypeptide is 2,3,4,5-tetrahydropyridine-2,6-dicarboxylate N-acetyltransferase (Lactiplantibacillus plantarum (strain ATCC BAA-793 / NCIMB 8826 / WCFS1) (Lactobacillus plantarum)).